Here is a 274-residue protein sequence, read N- to C-terminus: 2,3,4,5-tetrahydropyridine-2,6-dicarboxylate N-succinyltransferase (274 aa).

Substrate-binding residues include R104 and D141.

The protein belongs to the transferase hexapeptide repeat family. In terms of assembly, homotrimer.

It is found in the cytoplasm. The enzyme catalyses (S)-2,3,4,5-tetrahydrodipicolinate + succinyl-CoA + H2O = (S)-2-succinylamino-6-oxoheptanedioate + CoA. It participates in amino-acid biosynthesis; L-lysine biosynthesis via DAP pathway; LL-2,6-diaminopimelate from (S)-tetrahydrodipicolinate (succinylase route): step 1/3. This chain is 2,3,4,5-tetrahydropyridine-2,6-dicarboxylate N-succinyltransferase, found in Shewanella oneidensis (strain ATCC 700550 / JCM 31522 / CIP 106686 / LMG 19005 / NCIMB 14063 / MR-1).